We begin with the raw amino-acid sequence, 509 residues long: Putative thymidine phosphorylase (509 aa).

Belongs to the thymidine/pyrimidine-nucleoside phosphorylase family. Type 2 subfamily.

It carries out the reaction thymidine + phosphate = 2-deoxy-alpha-D-ribose 1-phosphate + thymine. The chain is Putative thymidine phosphorylase from Chelativorans sp. (strain BNC1).